We begin with the raw amino-acid sequence, 1111 residues long: uncharacterized protein (1111 aa).

The signal sequence occupies residues 1 to 31; sequence MIRKLMKIPPFFTALFASAMFTLSVSQGVLA. Helical transmembrane passes span 490–510, 538–558, 572–592, 620–640, 644–664, 694–714, 797–817, 840–860, 885–905, 922–942, and 1003–1023; these read LPYL…IFKF, LALL…LAVC, FWHW…WISL, IIVV…TDAG, DVLG…IIAP, IPVG…LNLI, FIWT…VTVV, SITL…YVLV, ITTL…FATL, GLGF…ILLF, and LVIS…QLLL.

Belongs to the MscS (TC 1.A.23) family.

The protein localises to the cell membrane. This is an uncharacterized protein from Haemophilus influenzae (strain ATCC 51907 / DSM 11121 / KW20 / Rd).